The chain runs to 259 residues: Ribosomal RNA small subunit methyltransferase A (259 aa).

S-adenosyl-L-methionine is bound by residues Asn-13, Leu-15, Gly-40, Glu-61, Asp-85, and Asn-103.

The protein belongs to the class I-like SAM-binding methyltransferase superfamily. rRNA adenine N(6)-methyltransferase family. RsmA subfamily.

The protein localises to the cytoplasm. The catalysed reaction is adenosine(1518)/adenosine(1519) in 16S rRNA + 4 S-adenosyl-L-methionine = N(6)-dimethyladenosine(1518)/N(6)-dimethyladenosine(1519) in 16S rRNA + 4 S-adenosyl-L-homocysteine + 4 H(+). In terms of biological role, specifically dimethylates two adjacent adenosines (A1518 and A1519) in the loop of a conserved hairpin near the 3'-end of 16S rRNA in the 30S particle. May play a critical role in biogenesis of 30S subunits. The sequence is that of Ribosomal RNA small subunit methyltransferase A from Neisseria gonorrhoeae (strain NCCP11945).